The sequence spans 180 residues: RNA polymerase sigma-E factor (180 aa).

A Polymerase core binding motif is present at residues 36-49 (DLLQTALARTYGRW). Residues 130 to 149 (TEETAAALGMSAGTVKSTLH) constitute a DNA-binding region (H-T-H motif).

It belongs to the sigma-70 factor family. ECF subfamily.

The protein resides in the cytoplasm. Its function is as follows. Sigma factors are initiation factors that promote the attachment of RNA polymerase to specific initiation sites and are then released. This sigma factor is required for the synthesis of the antibiotic actinomycin. This Streptomyces antibioticus protein is RNA polymerase sigma-E factor (sigE).